The chain runs to 483 residues: MTKMDIRGAVDAAVPTNIIAAKAAEVRANKVNWQSYLQGQMISAEDCEFIQRFEMKRSPEEKQEMLQTEGSQCAKTFINLMTHICKEQTVQYILTMVDDMLQENHQRVSIFFDYARCSKNTAWPYFLPMLNRQDPFTVHMAARIIAKLAAWGKELMEGSDLNYYFNWIKTQLSSQKLRGSGVAVETGTVSSSDSSQYVQCVAGCLQLMLRVNEYRFAWVEADGVNCIMGVLSNKCGFQLQYQMIFSIWLLAFSPQMCEHLRRYNIIPVLSDILQESVKEKVTRIILAAFRNFLEKSTERETRQEYALAMIQCKVLKQLENLEQQKYDDEDISEDIKFLLEKLGESVQDLSSFDEYSSELKSGRLEWSPVHKSEKFWRENAVRLNEKNYELLKILTKLLEVSDDPQVLAVAAHDVGEYVRHYPRGKRVIEQLGGKQLVMNHMHHEDQQVRYNALLAVQKLMVHNWEYLGKQLQSEQPQTAAARS.

Ser483 is modified (phosphoserine).

This sequence belongs to the V-ATPase H subunit family. In terms of assembly, V-ATPase is a heteromultimeric enzyme made up of two complexes: the ATP-hydrolytic V1 complex and the proton translocation V0 complex. The V1 complex consists of three catalytic AB heterodimers that form a heterohexamer, three peripheral stalks each consisting of EG heterodimers, one central rotor including subunits D and F, and the regulatory subunits C and H. The proton translocation complex V0 consists of the proton transport subunit a, a ring of proteolipid subunits c9c'', rotary subunit d, subunits e and f, and the accessory subunits ATP6AP1/Ac45 and ATP6AP2/PRR. Interacts with AP2M1. Interacts with TM9SF4 in colon cancer cells. As to quaternary structure, (Microbial infection) Interacts with HIV-1 Nef protein. (Microbial infection) Interacts with M.tuberculosis PtpA, which blocks V-ATPase trafficking and phagosome acidification. As to expression, widely expressed.

It is found in the cytoplasmic vesicle. Its subcellular location is the clathrin-coated vesicle membrane. Subunit of the V1 complex of vacuolar(H+)-ATPase (V-ATPase), a multisubunit enzyme composed of a peripheral complex (V1) that hydrolyzes ATP and a membrane integral complex (V0) that translocates protons. V-ATPase is responsible for acidifying and maintaining the pH of intracellular compartments and in some cell types, is targeted to the plasma membrane, where it is responsible for acidifying the extracellular environment. Subunit H is essential for V-ATPase activity, but not for the assembly of the complex. Involved in the endocytosis mediated by clathrin-coated pits, required for the formation of endosomes. This is V-type proton ATPase subunit H (ATP6V1H) from Homo sapiens (Human).